Consider the following 304-residue polypeptide: Ribosomal RNA small subunit methyltransferase H (304 aa).

Residues 37 to 39 (GGH), Asp57, Phe79, Asp100, and His107 contribute to the S-adenosyl-L-methionine site.

Belongs to the methyltransferase superfamily. RsmH family.

The protein resides in the cytoplasm. It carries out the reaction cytidine(1402) in 16S rRNA + S-adenosyl-L-methionine = N(4)-methylcytidine(1402) in 16S rRNA + S-adenosyl-L-homocysteine + H(+). Functionally, specifically methylates the N4 position of cytidine in position 1402 (C1402) of 16S rRNA. The chain is Ribosomal RNA small subunit methyltransferase H from Bacteroides fragilis (strain ATCC 25285 / DSM 2151 / CCUG 4856 / JCM 11019 / LMG 10263 / NCTC 9343 / Onslow / VPI 2553 / EN-2).